Here is a 537-residue protein sequence, read N- to C-terminus: 2-isopropylmalate synthase (537 aa).

One can recognise a Pyruvate carboxyltransferase domain in the interval 8–273; that stretch reads IIIFDTTLRD…FLGRPVDSME (266 aa). Positions 17, 208, 210, and 244 each coordinate Mn(2+). The regulatory domain stretch occupies residues 408-537; that stretch reads RLELVQVSCG…PSEPVLTSKN (130 aa).

This sequence belongs to the alpha-IPM synthase/homocitrate synthase family. LeuA type 1 subfamily. Homodimer. The cofactor is Mn(2+).

The protein resides in the cytoplasm. It catalyses the reaction 3-methyl-2-oxobutanoate + acetyl-CoA + H2O = (2S)-2-isopropylmalate + CoA + H(+). The protein operates within amino-acid biosynthesis; L-leucine biosynthesis; L-leucine from 3-methyl-2-oxobutanoate: step 1/4. In terms of biological role, catalyzes the condensation of the acetyl group of acetyl-CoA with 3-methyl-2-oxobutanoate (2-ketoisovalerate) to form 3-carboxy-3-hydroxy-4-methylpentanoate (2-isopropylmalate). This Crocosphaera subtropica (strain ATCC 51142 / BH68) (Cyanothece sp. (strain ATCC 51142)) protein is 2-isopropylmalate synthase.